A 560-amino-acid polypeptide reads, in one-letter code: DNA ligase B (560 aa).

The active-site N6-AMP-lysine intermediate is Lys-124.

This sequence belongs to the NAD-dependent DNA ligase family. LigB subfamily.

The catalysed reaction is NAD(+) + (deoxyribonucleotide)n-3'-hydroxyl + 5'-phospho-(deoxyribonucleotide)m = (deoxyribonucleotide)n+m + AMP + beta-nicotinamide D-nucleotide.. Its function is as follows. Catalyzes the formation of phosphodiester linkages between 5'-phosphoryl and 3'-hydroxyl groups in double-stranded DNA using NAD as a coenzyme and as the energy source for the reaction. The sequence is that of DNA ligase B from Escherichia coli O6:K15:H31 (strain 536 / UPEC).